Consider the following 834-residue polypeptide: ATP-dependent RNA helicase ddx23 (834 aa).

Disordered stretches follow at residues 1 to 245 (MDPP…TQFS) and 322 to 371 (FGGY…GKQI). Residues 10–25 (SKRDTKKKDEVNKEQP) are compositionally biased toward basic and acidic residues. Over residues 42 to 54 (SNPTQEEPTNTLQ) the composition is skewed to polar residues. 4 stretches are compositionally biased toward basic and acidic residues: residues 70–110 (GLKE…DYRD), 117–164 (GRDR…RRDG), 171–205 (RRRDERRENSGRRDYRDNDRRDDRRDNGRYGRDND), and 231–245 (DIHKDRIKRDTTQFS). Low complexity predominate over residues 328 to 362 (NNNNNGNHYNGNIYNNNNNNNNNNNNNNNINNNNN). A Q motif motif is present at residues 413 to 441 (RTWQESNLPREILEAIRQLGYEKPSPIQM). Positions 444 to 643 (IPISLTGRDI…KKYLRRPCTI (200 aa)) constitute a Helicase ATP-binding domain. ATP is bound at residue 457–464 (AETGSGKT). The DEAD box signature appears at 570-573 (DEAD). Positions 654-815 (RIRQTVIFVK…IVPIELLKHP (162 aa)) constitute a Helicase C-terminal domain. The segment at 813–834 (KHPSSQQKHGSSKDHNKSVIFK) is disordered. Over residues 823 to 834 (SSKDHNKSVIFK) the composition is skewed to basic and acidic residues.

This sequence belongs to the DEAD box helicase family. DDX23/PRP28 subfamily.

It localises to the cytoplasm. It is found in the nucleus. It carries out the reaction ATP + H2O = ADP + phosphate + H(+). In terms of biological role, probable ATP-dependent RNA helicase which may be involved in mRNA splicing. In Dictyostelium discoideum (Social amoeba), this protein is ATP-dependent RNA helicase ddx23 (helB2).